The following is a 249-amino-acid chain: MIDKAEGLVLRTVVYGESNKIITLLTREYGKLAVMARGAKKPGSRFNAASQPFVRAIYVYPRSRGLGQLKSADVITGYSKIRQDVFLMAYAMYLLELADKALDERVPQPALYDLFVDGLEAMDEGLDPDVVSFIVELRLLRHLGIAPHLNGCTVCGSVEAPFAFSLNHGGLLCRRHRQEDEHAVSLTESVAKMLYVFSVYDFSRIGTVDVKPETKRLLRQIMDAYMERYSGLRLRSKRVLDQLLNLGDD.

The protein belongs to the RecO family.

In terms of biological role, involved in DNA repair and RecF pathway recombination. The chain is DNA repair protein RecO from Exiguobacterium sibiricum (strain DSM 17290 / CCUG 55495 / CIP 109462 / JCM 13490 / 255-15).